A 360-amino-acid polypeptide reads, in one-letter code: Homoserine O-acetyltransferase (360 aa).

The AB hydrolase-1 domain occupies Asn-41–Asp-344. The active-site Nucleophile is the Ser-144. Substrate is bound at residue Arg-213. Active-site residues include Asp-305 and His-338. Asp-339 contributes to the substrate binding site.

The protein belongs to the AB hydrolase superfamily. MetX family. Homodimer.

It localises to the cytoplasm. The enzyme catalyses L-homoserine + acetyl-CoA = O-acetyl-L-homoserine + CoA. The protein operates within amino-acid biosynthesis; L-methionine biosynthesis via de novo pathway; O-acetyl-L-homoserine from L-homoserine: step 1/1. Functionally, transfers an acetyl group from acetyl-CoA to L-homoserine, forming acetyl-L-homoserine. The sequence is that of Homoserine O-acetyltransferase from Pasteurella multocida (strain Pm70).